Consider the following 141-residue polypeptide: Hemoglobin subunit alpha-A (141 aa).

The 141-residue stretch at 1–141 (VLSASDKSNV…VGTVLTAKYR (141 aa)) folds into the Globin domain. H58 is a binding site for O2. H87 contributes to the heme b binding site.

It belongs to the globin family. As to quaternary structure, heterotetramer of two alpha chains and two beta chains. Red blood cells.

In terms of biological role, involved in oxygen transport from the lung to the various peripheral tissues. The sequence is that of Hemoglobin subunit alpha-A (HBAA) from Streptopelia orientalis (Eastern turtle dove).